We begin with the raw amino-acid sequence, 395 residues long: Succinyl-diaminopimelate desuccinylase (395 aa).

A Zn(2+)-binding site is contributed by histidine 74. Aspartate 76 is an active-site residue. Aspartate 107 lines the Zn(2+) pocket. Glutamate 141 functions as the Proton acceptor in the catalytic mechanism. The Zn(2+) site is built by glutamate 142, glutamate 170, and histidine 368.

Belongs to the peptidase M20A family. DapE subfamily. In terms of assembly, homodimer. Requires Zn(2+) as cofactor. Co(2+) serves as cofactor.

The catalysed reaction is N-succinyl-(2S,6S)-2,6-diaminopimelate + H2O = (2S,6S)-2,6-diaminopimelate + succinate. The protein operates within amino-acid biosynthesis; L-lysine biosynthesis via DAP pathway; LL-2,6-diaminopimelate from (S)-tetrahydrodipicolinate (succinylase route): step 3/3. Its function is as follows. Catalyzes the hydrolysis of N-succinyl-L,L-diaminopimelic acid (SDAP), forming succinate and LL-2,6-diaminopimelate (DAP), an intermediate involved in the bacterial biosynthesis of lysine and meso-diaminopimelic acid, an essential component of bacterial cell walls. The polypeptide is Succinyl-diaminopimelate desuccinylase (Brucella melitensis biotype 1 (strain ATCC 23456 / CCUG 17765 / NCTC 10094 / 16M)).